The chain runs to 545 residues: Membrane protein insertase YidC (545 aa).

4 consecutive transmembrane segments (helical) span residues 350 to 370 (IIGN…AVLY), 424 to 444 (LPML…FASV), 461 to 481 (ADPY…QTYL), and 498 to 518 (PLVF…YWVI).

Belongs to the OXA1/ALB3/YidC family. Type 1 subfamily. Interacts with the Sec translocase complex via SecD. Specifically interacts with transmembrane segments of nascent integral membrane proteins during membrane integration.

It is found in the cell inner membrane. Functionally, required for the insertion and/or proper folding and/or complex formation of integral membrane proteins into the membrane. Involved in integration of membrane proteins that insert both dependently and independently of the Sec translocase complex, as well as at least some lipoproteins. Aids folding of multispanning membrane proteins. The sequence is that of Membrane protein insertase YidC from Neisseria meningitidis serogroup A / serotype 4A (strain DSM 15465 / Z2491).